Reading from the N-terminus, the 66-residue chain is Beta-defensin 13 (66 aa).

Positions 1-22 (MRIFSLIVAGLVLLIQLHPAKG) are cleaved as a signal peptide. Cystine bridges form between Cys30/Cys59, Cys37/Cys51, and Cys41/Cys60.

The protein belongs to the beta-defensin family.

The protein localises to the secreted. Functionally, has antibacterial activity. The sequence is that of Beta-defensin 13 (Defb13) from Rattus norvegicus (Rat).